The chain runs to 95 residues: Large ribosomal subunit protein bL27 (95 aa).

Positions 1–10 are excised as a propeptide; the sequence is MRFILNLQFF.

It belongs to the bacterial ribosomal protein bL27 family. In terms of processing, the N-terminus is cleaved by ribosomal processing cysteine protease Prp.

The polypeptide is Large ribosomal subunit protein bL27 (Mesoplasma florum (strain ATCC 33453 / NBRC 100688 / NCTC 11704 / L1) (Acholeplasma florum)).